Here is a 143-residue protein sequence, read N- to C-terminus: Transcriptional regulator MraZ (143 aa).

2 consecutive SpoVT-AbrB domains span residues 5-47 (TFTP…PRNV) and 76-119 (ADEQ…NAES).

This sequence belongs to the MraZ family. As to quaternary structure, forms oligomers.

The protein resides in the cytoplasm. It is found in the nucleoid. The polypeptide is Transcriptional regulator MraZ (Corynebacterium kroppenstedtii (strain DSM 44385 / JCM 11950 / CIP 105744 / CCUG 35717)).